We begin with the raw amino-acid sequence, 77 residues long: Small nuclear ribonucleoprotein G (77 aa).

Residues 2–77 (VSTPELKKYM…IISLEALDAI (76 aa)) form the Sm domain.

This sequence belongs to the snRNP Sm proteins family. As to quaternary structure, component of the Sm core complex, present in spliceosomal snRNP U1, U2, U4/U6 and U5. The core complex contains SMB1, SMD1, SMD2, SMD3, SME1, SMX3 and SMX2 (Sm proteins B, D1, D2, D3, E, F and G, respectively), and is probably a heptameric ring structure. SMX2 specifically interacts with SME1. Belongs to the CWC complex (or CEF1-associated complex), a spliceosome sub-complex reminiscent of a late-stage spliceosome composed of the U2, U5 and U6 snRNAs and at least BUD13, BUD31, BRR2, CDC40, CEF1, CLF1, CUS1, CWC2, CWC15, CWC21, CWC22, CWC23, CWC24, CWC25, CWC27, ECM2, HSH155, IST3, ISY1, LEA1, MSL1, NTC20, PRP8, PRP9, PRP11, PRP19, PRP21, PRP22, PRP45, PRP46, SLU7, SMB1, SMD1, SMD2, SMD3, SMX2, SMX3, SNT309, SNU114, SPP2, SYF1, SYF2, RSE1 and YJU2. Component of the U4/U6-U5 tri-snRNP complex composed of the U4, U6 and U5 snRNAs and at least PRP3, PRP4, PRP6, PRP8, PRP18, PRP31, PRP38, SNU13, SNU23, SNU66, SNU114, SPP381, SMB1, SMD1, SMD2, SMD3, SMX2, SMX3, LSM2, LSM3, LSM4, LSM5, LSM6, LSM7, LSM8, BRR2 and DIB1.

It localises to the nucleus. The protein resides in the cytoplasm. Functionally, plays a role in pre-mRNA splicing as a core component of the spliceosomal U1, U2, U4 and U5 small nuclear ribonucleoproteins (snRNPs), the building blocks of the spliceosome. The sequence is that of Small nuclear ribonucleoprotein G (SMX2) from Saccharomyces cerevisiae (strain ATCC 204508 / S288c) (Baker's yeast).